A 303-amino-acid chain; its full sequence is UDP-3-O-acyl-N-acetylglucosamine deacetylase (303 aa).

Zn(2+) is bound by residues His78, His237, and Asp241. The active-site Proton donor is His264.

The protein belongs to the LpxC family. Zn(2+) serves as cofactor.

It carries out the reaction a UDP-3-O-[(3R)-3-hydroxyacyl]-N-acetyl-alpha-D-glucosamine + H2O = a UDP-3-O-[(3R)-3-hydroxyacyl]-alpha-D-glucosamine + acetate. It functions in the pathway glycolipid biosynthesis; lipid IV(A) biosynthesis; lipid IV(A) from (3R)-3-hydroxytetradecanoyl-[acyl-carrier-protein] and UDP-N-acetyl-alpha-D-glucosamine: step 2/6. Its function is as follows. Catalyzes the hydrolysis of UDP-3-O-myristoyl-N-acetylglucosamine to form UDP-3-O-myristoylglucosamine and acetate, the committed step in lipid A biosynthesis. The chain is UDP-3-O-acyl-N-acetylglucosamine deacetylase from Pseudomonas putida (strain ATCC 700007 / DSM 6899 / JCM 31910 / BCRC 17059 / LMG 24140 / F1).